The chain runs to 138 residues: Cysteine desulfuration protein SufE (138 aa).

Cys-51 serves as the catalytic Cysteine persulfide intermediate.

It belongs to the SufE family. Homodimer. Interacts with SufS.

The protein localises to the cytoplasm. Its pathway is cofactor biosynthesis; iron-sulfur cluster biosynthesis. In terms of biological role, participates in cysteine desulfuration mediated by SufS. Cysteine desulfuration mobilizes sulfur from L-cysteine to yield L-alanine and constitutes an essential step in sulfur metabolism for biosynthesis of a variety of sulfur-containing biomolecules. Functions as a sulfur acceptor for SufS, by mediating the direct transfer of the sulfur atom from the S-sulfanylcysteine of SufS, an intermediate product of cysteine desulfuration process. This Citrobacter koseri (strain ATCC BAA-895 / CDC 4225-83 / SGSC4696) protein is Cysteine desulfuration protein SufE.